A 499-amino-acid polypeptide reads, in one-letter code: Maturase K (499 aa).

Belongs to the intron maturase 2 family. MatK subfamily.

The protein localises to the plastid. It is found in the chloroplast. Usually encoded in the trnK tRNA gene intron. Probably assists in splicing its own and other chloroplast group II introns. This chain is Maturase K, found in Neltuma juliflora (Mesquite).